The chain runs to 370 residues: Cathepsin B-like cysteine proteinase 3 (370 aa).

The N-terminal stretch at 1–16 (MLKVYFLALFLAGCSA) is a signal peptide. Positions 17–91 (FVLDEIRGIN…FVRGEIVPEP (75 aa)) are excised as a propeptide. 6 cysteine pairs are disulfide-bonded: Cys-105/Cys-134, Cys-117/Cys-162, Cys-153/Cys-210, Cys-154/Cys-158, Cys-190/Cys-214, and Cys-198/Cys-202. The active site involves Cys-120. The N-linked (GlcNAc...) asparagine glycan is linked to Asn-138. Catalysis depends on residues His-284 and Asn-304.

It belongs to the peptidase C1 family.

In Caenorhabditis elegans, this protein is Cathepsin B-like cysteine proteinase 3 (cpr-3).